Here is a 435-residue protein sequence, read N- to C-terminus: MDIETDGRFGNKRVHHRLGPANGAASSSTSGKVCIHWRAGRCNRFPCPYLHSELPEATAKRPSQSGGGGNVWRNPHSGGGGGRGAGGAGGPNKWGRGPGGADGGPRHKVPDRPCRYFLAGDCSYGEKCRYPHSYSMSDSITMLTPLQGHEKVVTGIALPAGSDKLYSGSKDGTVRMWDCQTGQCAGVINMGREIGCMISEGPWLFVGIPDAVKVWNMQTQAEMNLTGPTGQVYALAVGNELLFAATQDGRILAWRFSAATNGFEPAASLVGHQLAVVSLVVGAMRLYSASMDKTIRVWDLATLQCIQTLSDHTGVVMSVLCWDQFLLSCSLDQTIKVWAATESGSLEVTYTHKEEHGALALSGMPDAQSKPVLLCSLNDNTVRLYDLPSFSDRGRIFSKQEIRAIQVGPSGLFFTGDGTGELKVWQWVIDGSQTK.

Disordered regions lie at residues 1–30 (MDIETDGRFGNKRVHHRLGPANGAASSSTS) and 58–107 (TAKR…GPRH). A C3H1-type 1 zinc finger spans residues 28-54 (STSGKVCIHWRAGRCNRFPCPYLHSEL). Gly residues predominate over residues 77–103 (SGGGGGRGAGGAGGPNKWGRGPGGADG). Residues 108–135 (KVPDRPCRYFLAGDCSYGEKCRYPHSYS) form a C3H1-type 2 zinc finger. WD repeat units lie at residues 148 to 189 (GHEK…GVIN), 191 to 225 (GREIGCMISEGPWLFVGIPDAVKVWNMQTQAEMNL), 227 to 264 (GPTGQVYALAVGNELLFAATQDGRILAWRFSAATNGFE), 271 to 308 (GHQLAVVSLVVGAMRLYSASMDKTIRVWDLATLQCIQT), 311 to 348 (DHTGVVMSVLCWDQFLLSCSLDQTIKVWAATESGSLEV), 355 to 395 (EHGA…DRGR), and 397 to 435 (FSKQEIRAIQVGPSGLFFTGDGTGELKVWQWVIDGSQTK).

The polypeptide is Zinc finger CCCH domain-containing protein 17 (Oryza sativa subsp. japonica (Rice)).